A 416-amino-acid polypeptide reads, in one-letter code: MSTPLQGIKVLDFTGVQSGPSCTQMLAWFGADVIKIERPGVGDVTRHQLRDIPDIDALYFTMLNSNKRSIELNTKTAEGKEVMEKLIREADILVENFHPGAIDHMGFTWEHIQEINPRLIFGSIKGFDECSPYVNVKAYENVAQAAGGAASTTGFWDGPPLVSAAALGDSNTGMHLLIGLLAALLHREKTGRGQRVTMSMQDAVLNLCRVKLRDQQRLDKLGYLEEYPQYPNGTFGDAVPRGGNAGGGGQPGWILKCKGWETDPNAYIYFTIQEQNWENTCKAIGKPEWITDSAYSTAHARQPHIFDIFAEIEKYTVTIDKHEAVAYLTQFDIPCAPVLSMKEISLDPSLRQSGSVVEVEQPLRGKYLTVGCPMKFSAFTPDIKAAPLLGEHTAAVLQELGYSDDEIAAMKQNHAI.

CoA is bound by residues 17 to 18, Arg-38, 72 to 75, 96 to 98, His-104, and 137 to 140; these read QS, LNTK, NFH, and KAYE. Residue Asp-169 is the Nucleophile of the active site. Substrate is bound at residue 248–250; the sequence is GGQ. A CoA-binding site is contributed by 273–275; sequence QEQ.

The protein belongs to the CoA-transferase III family. Frc subfamily. Homodimer.

It carries out the reaction formyl-CoA + oxalate = oxalyl-CoA + formate. It functions in the pathway metabolic intermediate degradation; oxalate degradation; CO(2) and formate from oxalate: step 1/2. Functionally, involved in the catabolism of oxalate and in the adapatation to low pH via the induction of the oxalate-dependent acid tolerance response (ATR). Catalyzes the transfer of the CoA moiety from formyl-CoA to oxalate. This is Formyl-CoA:oxalate CoA-transferase from Shigella sonnei (strain Ss046).